The sequence spans 157 residues: Arginine regulator (157 aa).

This sequence belongs to the ArgR family.

It is found in the cytoplasm. It participates in amino-acid degradation; L-arginine degradation via ADI pathway. Regulates the transcription of the arc operon, involved in arginine catabolism. The chain is Arginine regulator (argR1) from Streptococcus pyogenes serotype M3 (strain SSI-1).